Reading from the N-terminus, the 281-residue chain is HTH-type transcriptional activator RhaR (281 aa).

Positions 178–276 constitute an HTH araC/xylS-type domain; that stretch reads DKLLAALAAS…GMSPGQWRQR (99 aa). DNA-binding regions (H-T-H motif) lie at residues 195–216 and 243–266; these read ERFC…RQQT and IGDI…SREI.

Binds DNA as a dimer.

It localises to the cytoplasm. Its function is as follows. Activates expression of the rhaSR operon in response to L-rhamnose. The polypeptide is HTH-type transcriptional activator RhaR (Klebsiella pneumoniae subsp. pneumoniae (strain ATCC 700721 / MGH 78578)).